A 308-amino-acid chain; its full sequence is Ribosomal RNA large subunit methyltransferase F (308 aa).

The protein belongs to the methyltransferase superfamily. METTL16/RlmF family.

Its subcellular location is the cytoplasm. It carries out the reaction adenosine(1618) in 23S rRNA + S-adenosyl-L-methionine = N(6)-methyladenosine(1618) in 23S rRNA + S-adenosyl-L-homocysteine + H(+). In terms of biological role, specifically methylates the adenine in position 1618 of 23S rRNA. The chain is Ribosomal RNA large subunit methyltransferase F from Escherichia coli O127:H6 (strain E2348/69 / EPEC).